A 336-amino-acid polypeptide reads, in one-letter code: Biotin synthase (336 aa).

A Radical SAM core domain is found at 36–263 (TKVQISTLLS…ESHVRLAAGR (228 aa)). [4Fe-4S] cluster-binding residues include cysteine 51, cysteine 55, and cysteine 58. [2Fe-2S] cluster contacts are provided by cysteine 95, cysteine 126, cysteine 186, and arginine 258.

Belongs to the radical SAM superfamily. Biotin synthase family. As to quaternary structure, homodimer. The cofactor is [4Fe-4S] cluster. [2Fe-2S] cluster serves as cofactor.

The catalysed reaction is (4R,5S)-dethiobiotin + (sulfur carrier)-SH + 2 reduced [2Fe-2S]-[ferredoxin] + 2 S-adenosyl-L-methionine = (sulfur carrier)-H + biotin + 2 5'-deoxyadenosine + 2 L-methionine + 2 oxidized [2Fe-2S]-[ferredoxin]. The protein operates within cofactor biosynthesis; biotin biosynthesis; biotin from 7,8-diaminononanoate: step 2/2. Its function is as follows. Catalyzes the conversion of dethiobiotin (DTB) to biotin by the insertion of a sulfur atom into dethiobiotin via a radical-based mechanism. The chain is Biotin synthase from Gluconobacter oxydans (strain 621H) (Gluconobacter suboxydans).